We begin with the raw amino-acid sequence, 920 residues long: GTPase activating protein homolog 1 (920 aa).

Positions 65–87 (NLGGLSNDSTNNNSNSNNTIDSS) are enriched in low complexity. Residues 65–91 (NLGGLSNDSTNNNSNSNNTIDSSKPLS) are disordered. One can recognise an F-BAR domain in the interval 90–344 (LSFENDMSDG…FVDIIDPEVD (255 aa)). Residues 184–276 (LNEAIKDMEK…EDEYKEQINE (93 aa)) are a coiled coil. The segment covering 403–449 (TNTITSQSGSTIISNGASQPIEIPSPQPISEQQQIPPQQQQQQQQAQ) has biased composition (low complexity). Disordered regions lie at residues 403–468 (TNTI…PMGR) and 490–518 (STSS…LSKS). The segment covering 450 to 468 (VPPTSINQSSSPPVNPMGR) has biased composition (polar residues). Residues 490–513 (STSSLLTKDGNSTTSSNTSTSNSN) show a composition bias toward low complexity. A Rho-GAP domain is found at 533-716 (VELEVLIEND…NMIIDSLETK (184 aa)). The tract at residues 727–836 (PIIPDDENSD…VSSNGNNINS (110 aa)) is disordered. A compositionally biased stretch (acidic residues) spans 730–741 (PDDENSDDDDDD). The span at 757 to 836 (NDINTTNINN…VSSNGNNINS (80 aa)) shows a compositional bias: low complexity.

The protein localises to the cytoplasm. It localises to the contractile vacuole. In terms of biological role, rho GTPase-activating protein involved in the signal transduction pathway. Regulator of the contractile vacuole network as well as involved in driving vacuole emptying. The protein is GTPase activating protein homolog 1 (mgp1) of Dictyostelium discoideum (Social amoeba).